The following is a 242-amino-acid chain: Lectin-like protein At1g53060 (242 aa).

Residues Phe3–Glu237 are legume-lectin like. Ser207 is modified (phosphoserine).

This sequence belongs to the leguminous lectin family.

In Arabidopsis thaliana (Mouse-ear cress), this protein is Lectin-like protein At1g53060.